The sequence spans 500 residues: MQDQYILALDQGTTSSRAMLFDRQGNIVSIAQKEFEQIYPQPGWVEHDPQEIWSTQAGVAAEAVTRTGLNGTSIAAIGITNQRETTIVWDRETGQPVYNAIVWQDRRTADFCDSLKKQGLEAKVRAKTGLPIDSYFSATKIRWILDNVPGARDKARQGKLAFGTVDSWLVWNFTKHELHVTDVTNASRTMLFNIHTRQWDDELLELLDIPRSMLPEVKASSEIYGHTKTTVFASKIPLAGIAGDQHAALFGQMCTTSGMVKNTYGTGCFLMMNTGDKPIESKNNLVTTIAWQIGDDVQYALEGSIFIAGAVVQWLRDGLGIIKTAAEIEALAASVPHSDGVYLVPAFAGLGAPHWNARARGSLFGVTRGTRDAHLARAALDAIAYQSLDVLAAMEADSGLSIGELRVDGGASANNLLMQFQADLLGVDAVRPQITETTALGAAYLAGLAIGYWKNLDEVRSQWQLDRRFAPSMPKQQVERCMAGWQRAVRAAKAWADDAQ.

Thr13 contacts ADP. Thr13, Thr14, and Ser15 together coordinate ATP. Thr13 is a binding site for sn-glycerol 3-phosphate. Position 17 (Arg17) interacts with ADP. Positions 83, 84, 135, and 244 each coordinate sn-glycerol 3-phosphate. Glycerol contacts are provided by Arg83, Glu84, Tyr135, Asp244, and Gln245. Thr266 and Gly309 together coordinate ADP. The ATP site is built by Thr266, Gly309, Gln313, and Gly410. ADP-binding residues include Gly410 and Asn414.

Belongs to the FGGY kinase family.

The catalysed reaction is glycerol + ATP = sn-glycerol 3-phosphate + ADP + H(+). The protein operates within polyol metabolism; glycerol degradation via glycerol kinase pathway; sn-glycerol 3-phosphate from glycerol: step 1/1. Inhibited by fructose 1,6-bisphosphate (FBP). Key enzyme in the regulation of glycerol uptake and metabolism. Catalyzes the phosphorylation of glycerol to yield sn-glycerol 3-phosphate. This chain is Glycerol kinase, found in Burkholderia multivorans (strain ATCC 17616 / 249).